Reading from the N-terminus, the 312-residue chain is Peroxidase (312 aa).

Residues 1–23 (MAMGSASCISLVVLVALATAASG) form the signal peptide. Residue glutamine 24 is modified to Pyrrolidone carboxylic acid. 4 disulfides stabilise this stretch: cysteine 34-cysteine 107, cysteine 67-cysteine 70, cysteine 113-cysteine 307, and cysteine 192-cysteine 218. Histidine 65 serves as the catalytic Proton acceptor. The Ca(2+) site is built by aspartate 66, glycine 69, aspartate 71, and serine 73. Residue proline 155 coordinates substrate. Position 185 (histidine 185) interacts with heme b. Residue threonine 186 coordinates Ca(2+). Ca(2+)-binding residues include aspartate 231, threonine 234, and aspartate 239. The N-linked (GlcNAc...) asparagine glycan is linked to asparagine 262.

Belongs to the peroxidase family. Classical plant (class III) peroxidase subfamily. Ca(2+) is required as a cofactor. It depends on heme b as a cofactor. Root.

The protein localises to the secreted. It carries out the reaction 2 a phenolic donor + H2O2 = 2 a phenolic radical donor + 2 H2O. In terms of biological role, removal of H(2)O(2), oxidation of toxic reductants, biosynthesis and degradation of lignin, suberization, auxin catabolism, response to environmental stresses such as wounding, pathogen attack and oxidative stress. These functions might be dependent on each isozyme/isoform in each plant tissue. Functionally, involved in defense response to powdery meldew fungus. The polypeptide is Peroxidase (Triticum aestivum (Wheat)).